The sequence spans 226 residues: MNPIICALDTQDLNEAISWANGLRDKVGMVKLGLEFFAAHGPSGVREVAKCNVPIFLDLKLYDIPNTVARTVEAIKALDVEMLTLHISGGTKMLKEALSIVQGKKIKLIGVTVLTSMGNEDLSELGVAREAKSQVILLAKLAKKIGLHGVVCSALEAQEVRQECGKDFKIITPGIRMNRGHDDQKRTATPKEAINSGADYIVIGRPITESSNPASSAELILKSLTD.

Residues Asp9, Lys31, 58–67 (DLKLYDIPNT), Thr115, Arg176, Gln184, Gly204, and Arg205 each bind substrate. Catalysis depends on Lys60, which acts as the Proton donor.

Belongs to the OMP decarboxylase family. Type 1 subfamily. Homodimer.

The catalysed reaction is orotidine 5'-phosphate + H(+) = UMP + CO2. The protein operates within pyrimidine metabolism; UMP biosynthesis via de novo pathway; UMP from orotate: step 2/2. Its function is as follows. Catalyzes the decarboxylation of orotidine 5'-monophosphate (OMP) to uridine 5'-monophosphate (UMP). The sequence is that of Orotidine 5'-phosphate decarboxylase from Wolbachia pipientis subsp. Culex pipiens (strain wPip).